The chain runs to 307 residues: Major immediate early protein (307 aa).

An RING-type zinc finger spans residues cysteine 39–asparagine 92.

This is Major immediate early protein (PE38) from Orgyia pseudotsugata multicapsid polyhedrosis virus (OpMNPV).